A 435-amino-acid polypeptide reads, in one-letter code: MFILTMGLNHHTAPIDIREKLVFKESEEEMALVTLQQEKSILENVIISTCNRTEIVAVVDQIHTGRYYLKRFMANWFQMDMEKIEPYLFFHEETDAVNHLYKVTAGLDSLVLGETQILGQVKHAFEIAKQTATTGTLLNKLFREVVTFAKKVHHHTKINENAVSVSYAAVEVAKKLYGSLDNKKIVLVGAGEMSELALQNLAGSGIADITIINRTKSNAELLANQFQAKVGAYENMNEHLMLADIVLVSTSAAEPIIKQAAMQDLMEQKASSMLVIDIGLPRNVEHDCSYIPNFHLYDIDDLAGVVSANSLERQRIVLELENTIEAEVRNFFEWEKQLGVVPVIRALREKALDMQEVTMTSLENKLPGLTEREYIQIGKHMKSIINQMLKQPISELKEMSVEEDATTSIEHFKRIFGLSETDVTVIEKEQAETRS.

Residues 49-52, Ser-109, 114-116, and Gln-120 contribute to the substrate site; these read TCNR and ETQ. Residue Cys-50 is the Nucleophile of the active site. Residue 189–194 coordinates NADP(+); it reads GAGEMS.

The protein belongs to the glutamyl-tRNA reductase family. In terms of assembly, homodimer.

The enzyme catalyses (S)-4-amino-5-oxopentanoate + tRNA(Glu) + NADP(+) = L-glutamyl-tRNA(Glu) + NADPH + H(+). Its pathway is porphyrin-containing compound metabolism; protoporphyrin-IX biosynthesis; 5-aminolevulinate from L-glutamyl-tRNA(Glu): step 1/2. Catalyzes the NADPH-dependent reduction of glutamyl-tRNA(Glu) to glutamate 1-semialdehyde (GSA). The polypeptide is Glutamyl-tRNA reductase (Listeria monocytogenes serotype 4b (strain F2365)).